The following is a 406-amino-acid chain: DNA primase large subunit PriL (406 aa).

Positions 302, 375, 384, and 389 each coordinate [4Fe-4S] cluster.

It belongs to the eukaryotic-type primase large subunit family. In terms of assembly, heterodimer of a small subunit (PriS) and a large subunit (PriL). The cofactor is [4Fe-4S] cluster.

Its function is as follows. Regulatory subunit of DNA primase, an RNA polymerase that catalyzes the synthesis of short RNA molecules used as primers for DNA polymerase during DNA replication. Stabilizes and modulates the activity of the small subunit, increasing the rate of DNA synthesis, and conferring RNA synthesis capability. The DNA polymerase activity may enable DNA primase to also catalyze primer extension after primer synthesis. May also play a role in DNA repair. The protein is DNA primase large subunit PriL of Methanopyrus kandleri (strain AV19 / DSM 6324 / JCM 9639 / NBRC 100938).